We begin with the raw amino-acid sequence, 399 residues long: Probable aspartate/prephenate aminotransferase (399 aa).

L-aspartate-binding residues include Gly-39, Trp-125, and Asn-175. N6-(pyridoxal phosphate)lysine is present on Lys-239. Arg-375 contributes to the L-aspartate binding site.

It belongs to the class-I pyridoxal-phosphate-dependent aminotransferase family. In terms of assembly, homodimer. Requires pyridoxal 5'-phosphate as cofactor.

The protein resides in the cytoplasm. The catalysed reaction is L-aspartate + 2-oxoglutarate = oxaloacetate + L-glutamate. It catalyses the reaction L-arogenate + 2-oxoglutarate = prephenate + L-glutamate. Catalyzes the reversible conversion of aspartate and 2-oxoglutarate to glutamate and oxaloacetate. Can also transaminate prephenate in the presence of glutamate. The protein is Probable aspartate/prephenate aminotransferase (aatA) of Rickettsia bellii (strain RML369-C).